Consider the following 271-residue polypeptide: Aquaporin-1 (271 aa).

Residues 1–11 (MASEFKKKLFW) lie on the Cytoplasmic side of the membrane. Residues 12–29 (RAVVAEFLAMILFIFISI) form a helical membrane-spanning segment. Residues 30 to 48 (GSALGFHYPIKSNQTTGAV) lie on the Extracellular side of the membrane. N-linked (GlcNAc...) asparagine glycosylation occurs at Asn-42. A helical transmembrane segment spans residues 49 to 67 (QDNVKVSLAFGLSIATLAQ). At 68–70 (SVG) the chain is on the cytoplasmic side. An intramembrane segment occupies 71-84 (HISGAHLNPAVTLG). Residues 78–80 (NPA) carry the NPA 1 motif. Over 85–92 (LLLSCQIS) the chain is Cytoplasmic. The helical transmembrane segment at 93-111 (VLRAIMYIIAQCVGAIVAT) threads the bilayer. The Extracellular segment spans residues 112–135 (AILSGITSSLPDNSLGLNALAPGV). The chain crosses the membrane as a helical span at residues 136-155 (NSGQGLGIEIIGTLQLVLCV). Topologically, residues 156–165 (LATTDRRRRD) are cytoplasmic. The helical transmembrane segment at 166–183 (LGGSGPLAIGFSVALGHL) threads the bilayer. Residues 184–188 (LAIDY) lie on the Extracellular side of the membrane. The stretch at 189–201 (TGCGINPARSFGS) is an intramembrane region. An NPA 2 motif is present at residues 194–196 (NPA). The Extracellular segment spans residues 202–208 (SVITHNF). Residues 209 to 226 (QDHWIFWVGPFIGAALAV) traverse the membrane as a helical segment. Topologically, residues 227–271 (LIYDFILAPRSSDLTDRVKVWTSGQVEEYDLDADDINSRVEMKPK) are cytoplasmic. Ser-249 bears the Phosphoserine mark. Phosphotyrosine is present on Tyr-255. Ser-264 carries the post-translational modification Phosphoserine.

This sequence belongs to the MIP/aquaporin (TC 1.A.8) family. As to quaternary structure, homotetramer; each monomer provides an independent water pore. Component of the ankyrin-1 complex in the erythrocyte, composed of ANK1, RHCE, RHAG, SLC4A1, EPB42, GYPA, GYPB and AQP1. Interacts with EPHB2; involved in endolymph production in the inner ear. Identified in a complex with STOM. Interacts (via the N-terminal) with ANK1 (via ANK 1-5 repeats). Interacts (via the C-terminal) with EPB42.

The protein localises to the cell membrane. It catalyses the reaction H2O(in) = H2O(out). It carries out the reaction nitric oxide(out) = nitric oxide(in). The enzyme catalyses CO2(out) = CO2(in). The catalysed reaction is glycerol(in) = glycerol(out). It catalyses the reaction H2O2(out) = H2O2(in). It carries out the reaction K(+)(in) = K(+)(out). The enzyme catalyses Na(+)(in) = Na(+)(out). Forms a water channel that facilitates the transport of water across cell membranes, playing a crucial role in water homeostasis in various tissues. Could also be permeable to small solutes including hydrogen peroxide, glycerol and gases such as amonnia (NH3), nitric oxide (NO) and carbon dioxide (CO2). Recruited to the ankyrin-1 complex, a multiprotein complex of the erythrocyte membrane, it could be part of a CO2 metabolon, linking facilitated diffusion of CO2 across the membrane, anion exchange of Cl(-)/HCO3(-) and interconversion of dissolved CO2 and carbonic acid in the cytosol. In vitro, it shows non-selective gated cation channel activity and may be permeable to cations like K(+) and Na(+) in vivo. The sequence is that of Aquaporin-1 from Bos taurus (Bovine).